Consider the following 69-residue polypeptide: MVFAPGEKSGKELEEVKLQNTSKQIVQNAILQAMRQVSQESLRREGRPGDSRAWGQLGGCELTKKHEKK.

A disordered region spans residues 39–69 (QESLRREGRPGDSRAWGQLGGCELTKKHEKK). Residues 41 to 50 (SLRREGRPGD) are compositionally biased toward basic and acidic residues.

As to quaternary structure, binds cAMP-dependent protein kinase (PKA). Interacts specifically with RII-regulatory subunits of PKA (PRKAR2A and PRKAR2B). Preferentially expressed in the neural tissues.

Protein kinase A (PKA)-binding protein. Binds to type II regulatory subunits of protein kinase A (PKA) and may block the A-kinase anchoring protein (AKAP)-mediated subcellular localization of PKA. This is A-kinase anchor protein inhibitor 1 from Mus musculus (Mouse).